The sequence spans 501 residues: Cytochrome P450 monooxygenase 76AD131 (501 aa).

Residues 1–21 form a helical membrane-spanning segment; it reads MGYYAIFAVVLPFLWTCFYLL. Asn115 and Asn264 each carry an N-linked (GlcNAc...) asparagine glycan. Position 444 (Cys444) interacts with heme.

The protein belongs to the cytochrome P450 family. Requires heme as cofactor. Highly expressed in aerial parts, in both skin and flesh tissues.

The protein resides in the membrane. It catalyses the reaction tyramine + reduced [NADPH--hemoprotein reductase] + O2 = dopamine + oxidized [NADPH--hemoprotein reductase] + H2O + H(+). The enzyme catalyses 3-methoxytyramine + reduced [NADPH--hemoprotein reductase] + O2 = 3,4-dihydroxy-5-methoxyphenethylamine + oxidized [NADPH--hemoprotein reductase] + H2O + H(+). The protein operates within aromatic compound metabolism. Its pathway is alkaloid biosynthesis. Functionally, cytochrome P450 monooxygenase participating in the biosynthesis of natural products derived from phenylethylamine, including mescaline, a natural hallucinogen potentially used in psychotherapeutic treatments. Catalyzes the hydroxylation of tyramine to dopamine and of 3-methoxytyramine to 3,4-dihydroxy-5-methoxyphenethylamine. The polypeptide is Cytochrome P450 monooxygenase 76AD131 (Lophophora williamsii (Peyote)).